The following is a 339-amino-acid chain: D-alanine--D-alanine ligase (339 aa).

The 213-residue stretch at K115–E327 folds into the ATP-grasp domain. Residue K142–H211 coordinates ATP. Residues D279, E293, and N295 each coordinate Mg(2+).

The protein belongs to the D-alanine--D-alanine ligase family. It depends on Mg(2+) as a cofactor. The cofactor is Mn(2+).

The protein resides in the cytoplasm. The catalysed reaction is 2 D-alanine + ATP = D-alanyl-D-alanine + ADP + phosphate + H(+). Its pathway is cell wall biogenesis; peptidoglycan biosynthesis. Cell wall formation. The polypeptide is D-alanine--D-alanine ligase (Wolbachia sp. subsp. Brugia malayi (strain TRS)).